Reading from the N-terminus, the 109-residue chain is N-alpha-acetyltransferase 38, NatC auxiliary subunit (109 aa).

The region spanning 23–101 is the Sm domain; it reads LARCKLENLL…VVSIEVETES (79 aa).

Belongs to the snRNP Sm proteins family. In terms of assembly, component of the N-terminal acetyltransferase C (NatC) complex.

It localises to the cytoplasm. Its subcellular location is the nucleus. In terms of biological role, auxillary component of the N-terminal acetyltransferase C (NatC) complex which catalyzes acetylation of N-terminal methionine residues. N-terminal acetylation protects proteins from ubiquitination and degradation by the N-end rule pathway. This is N-alpha-acetyltransferase 38, NatC auxiliary subunit (naa38) from Danio rerio (Zebrafish).